The following is a 506-amino-acid chain: Anaerobic nitric oxide reductase transcription regulator NorR (506 aa).

D57 carries the post-translational modification 4-aspartylphosphate. The 230-residue stretch at 187–416 (MIGLSPAMTQ…LEHAIHRAVV (230 aa)) folds into the Sigma-54 factor interaction domain. Residues 215-222 (GETGTGKE) and 278-287 (ADNGTLFLDE) each bind ATP. The segment at residues 481–500 (WAASARALETDVANLHRLAK) is a DNA-binding region (H-T-H motif).

It participates in nitrogen metabolism; nitric oxide reduction. In terms of biological role, required for the expression of anaerobic nitric oxide (NO) reductase, acts as a transcriptional activator for at least the norVW operon. Activation also requires sigma-54. This chain is Anaerobic nitric oxide reductase transcription regulator NorR, found in Salmonella choleraesuis (strain SC-B67).